The following is a 500-amino-acid chain: L-arabinose isomerase (500 aa).

The Mn(2+) site is built by glutamate 306, glutamate 333, histidine 350, and histidine 450.

It belongs to the arabinose isomerase family. As to quaternary structure, homohexamer. It depends on Mn(2+) as a cofactor.

The enzyme catalyses beta-L-arabinopyranose = L-ribulose. Its pathway is carbohydrate degradation; L-arabinose degradation via L-ribulose; D-xylulose 5-phosphate from L-arabinose (bacterial route): step 1/3. In terms of biological role, catalyzes the conversion of L-arabinose to L-ribulose. In Salmonella arizonae (strain ATCC BAA-731 / CDC346-86 / RSK2980), this protein is L-arabinose isomerase.